The chain runs to 230 residues: Cytidylate kinase (230 aa).

11-19 serves as a coordination point for ATP; it reads GPAAAGKST.

This sequence belongs to the cytidylate kinase family. Type 1 subfamily.

The protein localises to the cytoplasm. The catalysed reaction is CMP + ATP = CDP + ADP. The enzyme catalyses dCMP + ATP = dCDP + ADP. The sequence is that of Cytidylate kinase from Oceanobacillus iheyensis (strain DSM 14371 / CIP 107618 / JCM 11309 / KCTC 3954 / HTE831).